Reading from the N-terminus, the 66-residue chain is Phylloseptin-Az2 (66 aa).

The signal sequence occupies residues M1–C22. A propeptide spanning residues E23–E44 is cleaved from the precursor. Positions E24–K45 are disordered. Positions E31 to K41 are enriched in acidic residues. A Phenylalanine amide modification is found at F65.

In terms of tissue distribution, expressed by the skin glands.

It is found in the secreted. Has antibacterial activity against the Gram-negative bacteria E.coli ATCC 11775 (MIC=7.2 uM), and the Gram-positive bacteria S.aureus ATCC 12600 (MIC=3.6 uM) and M.luteus ATCC 49732 (MIC=1.8 uM). Does not inhibit the growth of the fungus C.albicans. This is Phylloseptin-Az2 from Pithecopus azureus (Orange-legged monkey tree frog).